The primary structure comprises 431 residues: Adenylosuccinate synthetase (431 aa).

GTP is bound by residues 13-19 (GDEGKGK) and 41-43 (GHT). Aspartate 14 functions as the Proton acceptor in the catalytic mechanism. 2 residues coordinate Mg(2+): aspartate 14 and glycine 41. IMP is bound by residues 14–17 (DEGK), 39–42 (NAGH), threonine 130, arginine 144, glutamine 225, threonine 240, and arginine 304. Histidine 42 acts as the Proton donor in catalysis. 300–306 (ATTHRPR) serves as a coordination point for substrate. GTP-binding positions include arginine 306, 332 to 334 (KLD), and 414 to 416 (STG).

It belongs to the adenylosuccinate synthetase family. Homodimer. It depends on Mg(2+) as a cofactor.

The protein resides in the cytoplasm. It catalyses the reaction IMP + L-aspartate + GTP = N(6)-(1,2-dicarboxyethyl)-AMP + GDP + phosphate + 2 H(+). Its pathway is purine metabolism; AMP biosynthesis via de novo pathway; AMP from IMP: step 1/2. In terms of biological role, plays an important role in the de novo pathway of purine nucleotide biosynthesis. Catalyzes the first committed step in the biosynthesis of AMP from IMP. The protein is Adenylosuccinate synthetase of Nitrosococcus oceani (strain ATCC 19707 / BCRC 17464 / JCM 30415 / NCIMB 11848 / C-107).